Here is a 398-residue protein sequence, read N- to C-terminus: 1-deoxy-D-xylulose 5-phosphate reductoisomerase (398 aa).

Threonine 11, glycine 12, serine 13, isoleucine 14, and asparagine 125 together coordinate NADPH. Lysine 126 is a 1-deoxy-D-xylulose 5-phosphate binding site. Glutamate 127 is a binding site for NADPH. Aspartate 151 contacts Mn(2+). Serine 152, glutamate 153, serine 186, and histidine 209 together coordinate 1-deoxy-D-xylulose 5-phosphate. Glutamate 153 provides a ligand contact to Mn(2+). Residue glycine 215 coordinates NADPH. The 1-deoxy-D-xylulose 5-phosphate site is built by serine 222, asparagine 227, lysine 228, and glutamate 231. A Mn(2+)-binding site is contributed by glutamate 231.

It belongs to the DXR family. Mg(2+) is required as a cofactor. Requires Mn(2+) as cofactor.

It catalyses the reaction 2-C-methyl-D-erythritol 4-phosphate + NADP(+) = 1-deoxy-D-xylulose 5-phosphate + NADPH + H(+). The protein operates within isoprenoid biosynthesis; isopentenyl diphosphate biosynthesis via DXP pathway; isopentenyl diphosphate from 1-deoxy-D-xylulose 5-phosphate: step 1/6. Functionally, catalyzes the NADPH-dependent rearrangement and reduction of 1-deoxy-D-xylulose-5-phosphate (DXP) to 2-C-methyl-D-erythritol 4-phosphate (MEP). This Acinetobacter baumannii (strain ACICU) protein is 1-deoxy-D-xylulose 5-phosphate reductoisomerase.